The sequence spans 1013 residues: Poly [ADP-ribose] polymerase 1 (1013 aa).

PARP-type zinc fingers lie at residues 10 to 92 and 113 to 203; these read YKAE…ESGG and FAVE…PAVK. The Zn(2+) site is built by Cys22, Cys25, His54, Cys57, Cys125, Cys128, His159, and Cys162. The tract at residues 202 to 228 is disordered; that stretch reads VKSEGKRKADEVDGGVSKKQKKEDEKL. Residues 207–209 carry the Nuclear localization signal motif; sequence KRK. Positions 219–353 constitute a PADR1 zinc-binding domain; that stretch reads KKQKKEDEKL…FKRQDRVFPK (135 aa). The zinc ribbon stretch occupies residues 284 to 326; sequence GSLKPCETCKGQLVFKSDAYYCTGDISAWTKCVFKTQTPDRKD. Cys289, Cys292, Cys305, and Cys315 together coordinate Zn(2+). A disordered region spans residues 353-385; that stretch reads KDAPPAAATPSSGSTTSAATSVSSASKNLTEAP. The span at 356 to 378 shows a compositional bias: low complexity; that stretch reads PPAAATPSSGSTTSAATSVSSAS. Residues 365 to 523 are automodification domain; it reads GSTTSAATSV…EGGSKSKKMK (159 aa). The 77-residue stretch at 385–461 folds into the BRCT domain; it reads PADKPLTGMK…RVVADDFLTD (77 aa). Glu413, Glu435, Glu444, Glu445, Glu464, Glu471, Glu484, and Glu488 each carry polyADP-ribosyl glutamic acid. Residues 494–507 are compositionally biased toward low complexity; that stretch reads AATKSTGAHSSKST. Residues 494–522 form a disordered region; it reads AATKSTGAHSSKSTGKVKEEEGGSKSKKM. Glu512 and Glu513 each carry polyADP-ribosyl glutamic acid. A WGR domain is found at 541–637; the sequence is CAHVLEQNGK…SNFTKYPNKF (97 aa). In terms of domain architecture, PARP alpha-helical spans 661–778; the sequence is KSQLEKPVQD…DIEVAYSLLR (118 aa). The region spanning 787 to 1013 is the PARP catalytic domain; that stretch reads DPIDINYEKL…IRFNYQTSLW (227 aa). NAD(+) contacts are provided by residues 861–863, Gly870, Arg877, and Ser903; that span reads HGS. Glu987 serves as the catalytic For poly [ADP-ribose] polymerase activity.

The protein belongs to the ARTD/PARP family. In terms of assembly, homodimer; PARP-type zinc-fingers from separate parp1 molecules form a dimer module that specifically recognizes DNA strand breaks. Poly-ADP-ribosylated on serine, glutamate and aspartate residues by autocatalysis. Auto-ADP-ribosylation on serine takes place following interaction with HPF1. Auto poly-ADP-ribosylation on serine residues promotes its dissociation from chromatin.

It localises to the chromosome. It is found in the nucleus. Its subcellular location is the nucleolus. The protein resides in the cytoplasm. The protein localises to the cytosol. The catalysed reaction is NAD(+) + (ADP-D-ribosyl)n-acceptor = nicotinamide + (ADP-D-ribosyl)n+1-acceptor + H(+).. It catalyses the reaction L-seryl-[protein] + NAD(+) = O-(ADP-D-ribosyl)-L-seryl-[protein] + nicotinamide + H(+). It carries out the reaction L-aspartyl-[protein] + NAD(+) = 4-O-(ADP-D-ribosyl)-L-aspartyl-[protein] + nicotinamide. The enzyme catalyses L-glutamyl-[protein] + NAD(+) = 5-O-(ADP-D-ribosyl)-L-glutamyl-[protein] + nicotinamide. The catalysed reaction is L-tyrosyl-[protein] + NAD(+) = O-(ADP-D-ribosyl)-L-tyrosyl-[protein] + nicotinamide + H(+). It catalyses the reaction L-histidyl-[protein] + NAD(+) = N(tele)-(ADP-D-ribosyl)-L-histidyl-[protein] + nicotinamide + H(+). With respect to regulation, ADP-ribosyltransferase activity is regulated via an allosteric activation mechanism. In absence of activation signal, parp1 is autoinhibited by the PARP alpha-helical domain (also named HD region), which prevents effective NAD(+)-binding. Activity is highly stimulated by signals, such as DNA strand breaks. Binding to damaged DNA unfolds the PARP alpha-helical domain, relieving autoinhibition. Poly-ADP-ribosyltransferase activity is tightly regulated and parp1 is removed from damaged chromatin following initial poly-ADP-ribosylation of chromatin to avoid prolonged residence (trapping) that has cytotoxic consequences. A number of factors or post-translational modifications (auto-poly-ADP-ribosylation) promote parp1 removal from chromatin. Functionally, poly-ADP-ribosyltransferase that mediates poly-ADP-ribosylation of proteins and plays a key role in DNA repair. Mediates glutamate, aspartate, serine, histidine or tyrosine ADP-ribosylation of proteins: the ADP-D-ribosyl group of NAD(+) is transferred to the acceptor carboxyl group of target residues and further ADP-ribosyl groups are transferred to the 2'-position of the terminal adenosine moiety, building up a polymer with an average chain length of 20-30 units. Serine ADP-ribosylation of proteins constitutes the primary form of ADP-ribosylation of proteins in response to DNA damage. Specificity for the different amino acids is conferred by interacting factors, such as hpf1 and nmnat1. Following interaction with hpf1, catalyzes serine ADP-ribosylation of target proteins; hpf1 confers serine specificity by completing the parp1 active site. Also catalyzes tyrosine ADP-ribosylation of target proteins following interaction with hpf1. Following interaction with nmnat1, catalyzes glutamate and aspartate ADP-ribosylation of target proteins; nmnat1 confers glutamate and aspartate specificity. Parp1 initiates the repair of DNA breaks: recognizes and binds DNA breaks within chromatin and recruits hpf1, licensing serine ADP-ribosylation of target proteins, such as histones (H2BS6ADPr and H3S10ADPr), thereby promoting decompaction of chromatin and the recruitment of repair factors leading to the reparation of DNA strand breaks. In addition to base excision repair (BER) pathway, also involved in double-strand breaks (DSBs) repair. Mediates the poly-ADP-ribosylation of a number of proteins. In addition to proteins, also able to ADP-ribosylate DNA: catalyzes ADP-ribosylation of DNA strand break termini containing terminal phosphates and a 2'-OH group in single- and double-stranded DNA, respectively. Parp1-mediated DNA repair in neurons plays a role in sleep: senses DNA damage in neurons and promotes sleep, facilitating efficient DNA repair. In addition to DNA repair, also involved in other processes, such as transcription regulation, programmed cell death, membrane repair, adipogenesis and innate immunity. Acts as a repressor of transcription: binds to nucleosomes and modulates chromatin structure in a manner similar to histone H1, thereby altering RNA polymerase II. Acts both as a positive and negative regulator of transcription elongation, depending on the context. Poly-ADP-ribose chains generated by parp1 also play a role in poly-ADP-ribose-dependent cell death, a process named parthanatos. Also acts as a negative regulator of the cGAS-STING pathway by mediating poly-ADP-ribosylation and inactivation of cgas. Acts as a negative regulator of adipogenesis by catalyzing poly ADP-ribosylation of histone H2B on 'Glu-35' (H2BE35ADPr). The protein is Poly [ADP-ribose] polymerase 1 of Danio rerio (Zebrafish).